A 327-amino-acid chain; its full sequence is MSVMSYIDAINLAMKEEMERDSRVFVLGEDVGRKGGVFKATAGLYEQFGEERVMDTPLAESAIAGVGIGAAMYGMRPIAEMQFADFIMPAVNQIISEAAKIRYRSNNDWSCPIVVRAPYGGGVHGALYHSQSVEAIFANQPGLKIVMPSTPYDAKGLLKAAVRDEDPVLFFEHKRAYRLIKGEVPADDYVLPIGKADVKREGDDITVITYGLCVHFALQAAERLEKDGISAHVVDLRTVYPLDKEAIIEAASKTGKVLLVTEDTKEGSIMSEVAAIISEHCLFDLDAPIKRLAGPDIPAMPYAPTMEKYFMVNPDKVEAAMRELAEF.

Residues Glu-29, 58-60 (LAE), Gln-82, and 86-89 (FIMP) each bind thiamine diphosphate. Substrate is bound by residues 83 to 86 (FADF) and His-129. His-129 acts as the Proton acceptor in catalysis.

In terms of assembly, heterotetramer of two alpha and two beta chains. Directly associated with ODBA in the E1 complex. Thiamine diphosphate serves as cofactor.

The catalysed reaction is N(6)-[(R)-lipoyl]-L-lysyl-[protein] + 3-methyl-2-oxobutanoate + H(+) = N(6)-[(R)-S(8)-2-methylpropanoyldihydrolipoyl]-L-lysyl-[protein] + CO2. The branched-chain alpha-keto dehydrogenase complex catalyzes the overall conversion of alpha-keto acids to acyl-CoA and CO(2). It contains multiple copies of three enzymatic components: branched-chain alpha-keto acid decarboxylase (E1), lipoamide acyltransferase (E2) and lipoamide dehydrogenase (E3). This chain is 2-oxoisovalerate dehydrogenase subunit beta (bfmBAB), found in Bacillus subtilis (strain 168).